The following is a 743-amino-acid chain: TSL-kinase interacting protein 1 (743 aa).

The SANT domain maps to 53–104; that stretch reads RQWAAWTHQEEESFFTALRQVGKNFEKITSRVQSKNKDQVRHYYYRLVRRMN. Disordered regions lie at residues 486–523 and 626–679; these read SGVH…PGEW and SPKG…TPCG. Positions 488–499 are enriched in basic and acidic residues; sequence VHDRPARSRDDY.

As to quaternary structure, interacts only with active kinase forms of TOUSLED. Interacts with SNL1. Post-translationally, phosphorylated in vitro by TOUSLED. Expressed in flowers, roots and leaves.

The protein localises to the nucleus. The sequence is that of TSL-kinase interacting protein 1 (TKI1) from Arabidopsis thaliana (Mouse-ear cress).